Here is a 500-residue protein sequence, read N- to C-terminus: Glycerol kinase (500 aa).

Residue T14 coordinates ADP. ATP contacts are provided by T14, T15, and S16. T14 provides a ligand contact to sn-glycerol 3-phosphate. R18 provides a ligand contact to ADP. Residues R84, E85, and Y136 each coordinate sn-glycerol 3-phosphate. Residues R84, E85, and Y136 each coordinate glycerol. H232 carries the post-translational modification Phosphohistidine; by HPr. Sn-glycerol 3-phosphate is bound at residue D246. Glycerol-binding residues include D246 and Q247. Residues T268 and G311 each contribute to the ADP site. Residues T268, G311, Q315, and G412 each contribute to the ATP site. The ADP site is built by G412 and N416.

Belongs to the FGGY kinase family. Homotetramer and homodimer (in equilibrium). In terms of processing, the phosphoenolpyruvate-dependent sugar phosphotransferase system (PTS), including enzyme I, and histidine-containing protein (HPr) are required for the phosphorylation, which leads to the activation of the enzyme.

It carries out the reaction glycerol + ATP = sn-glycerol 3-phosphate + ADP + H(+). It functions in the pathway polyol metabolism; glycerol degradation via glycerol kinase pathway; sn-glycerol 3-phosphate from glycerol: step 1/1. Its activity is regulated as follows. Activated by phosphorylation and inhibited by fructose 1,6-bisphosphate (FBP). In terms of biological role, key enzyme in the regulation of glycerol uptake and metabolism. Catalyzes the phosphorylation of glycerol to yield sn-glycerol 3-phosphate. This chain is Glycerol kinase, found in Streptococcus uberis (strain ATCC BAA-854 / 0140J).